The primary structure comprises 506 residues: Cysteine--tRNA ligase (506 aa).

Cys-34 contributes to the Zn(2+) binding site. The short motif at 36-46 (PTVYDFAHIGN) is the 'HIGH' region element. Cys-230, His-269, and Glu-273 together coordinate Zn(2+). The short motif at 302 to 306 (KMSKS) is the 'KMSKS' region element. An ATP-binding site is contributed by Lys-305.

It belongs to the class-I aminoacyl-tRNA synthetase family. As to quaternary structure, monomer. Zn(2+) is required as a cofactor.

The protein resides in the cytoplasm. The catalysed reaction is tRNA(Cys) + L-cysteine + ATP = L-cysteinyl-tRNA(Cys) + AMP + diphosphate. This is Cysteine--tRNA ligase from Brucella abortus (strain S19).